Consider the following 71-residue polypeptide: Protein CYSTEINE-RICH TRANSMEMBRANE MODULE 6 (71 aa).

Polar residues predominate over residues 1-12 (MSQYSQNQSSGA). The tract at residues 1-36 (MSQYSQNQSSGAYPTPPVSTGPYVAPPPLGYPTNDT) is disordered. The span at 14–30 (PTPPVSTGPYVAPPPLG) shows a compositional bias: pro residues. Residues 48–64 (SKGDGFLKGCLAAMCCC) traverse the membrane as a helical segment.

The protein belongs to the CYSTM1 family. As to quaternary structure, homodimer and heterodimers. Interacts with CYSTM7 and WIH1/CYSTM13. As to expression, mostly expressed in roots, stems, rosette leaves and siliques and, to a lower extent, in flowers and cauline leaves.

The protein resides in the cell membrane. The protein localises to the cytoplasm. Functionally, involved in resistance to abiotic stress. The protein is Protein CYSTEINE-RICH TRANSMEMBRANE MODULE 6 of Arabidopsis thaliana (Mouse-ear cress).